The sequence spans 337 residues: Ornithine carbamoyltransferase, catabolic (337 aa).

Carbamoyl phosphate-binding positions include serine 57–threonine 60, glutamine 84, arginine 108, and histidine 135–glutamine 138. Residues asparagine 167, aspartate 231, and serine 235 to methionine 236 contribute to the L-ornithine site. Carbamoyl phosphate is bound by residues cysteine 272–leucine 273 and arginine 317.

It belongs to the aspartate/ornithine carbamoyltransferase superfamily. OTCase family.

The protein resides in the cytoplasm. It carries out the reaction carbamoyl phosphate + L-ornithine = L-citrulline + phosphate + H(+). The protein operates within amino-acid degradation; L-arginine degradation via ADI pathway; carbamoyl phosphate from L-arginine: step 2/2. Functionally, reversibly catalyzes the transfer of the carbamoyl group from carbamoyl phosphate (CP) to the N(epsilon) atom of ornithine (ORN) to produce L-citrulline. This Streptococcus ratti protein is Ornithine carbamoyltransferase, catabolic.